Reading from the N-terminus, the 161-residue chain is Arachidonate 5-lipoxygenase-activating protein (161 aa).

The Lumenal portion of the chain corresponds to 1–8 (MDQEAVGN). A helical membrane pass occupies residues 9-30 (IVLLAIVTLISVVQNGFFAHKV). Topologically, residues 31–52 (EHESKTHNGRSFQRTGTLAFER) are cytoplasmic. Residues 53–77 (VYTANQNCVDAYPTFLVMLWSAGLL) form a helical membrane-spanning segment. Topologically, residues 78–80 (CSQ) are lumenal. The helical transmembrane segment at 81-102 (VPAAFAGLMYLFVRQKYFVGYL) threads the bilayer. Topologically, residues 103-107 (GERTQ) are cytoplasmic. Residues 108–115 (STPGYIFG) lie within the membrane without spanning it. A helical membrane pass occupies residues 116–128 (KRIILFLFAMSLA). The Lumenal segment spans residues 129–161 (GILNYFFIALFGSDFENYIKTVTTTISPLLLIP).

The protein belongs to the MAPEG family. In terms of assembly, homotrimer. Interacts with LTC4S and ALOX5.

It localises to the nucleus membrane. It is found in the endoplasmic reticulum membrane. Functionally, required for leukotriene biosynthesis by ALOX5 (5-lipoxygenase). Anchors ALOX5 to the membrane. Binds arachidonic acid, and could play an essential role in the transfer of arachidonic acid to ALOX5. Binds to MK-886, a compound that blocks the biosynthesis of leukotrienes. The chain is Arachidonate 5-lipoxygenase-activating protein (ALOX5AP) from Bos taurus (Bovine).